A 361-amino-acid chain; its full sequence is D-alanine--D-alanine ligase (361 aa).

The ATP-grasp domain occupies 144–350 (KLCVSEAGIA…FPELCDRLLQ (207 aa)). Residue 177-232 (PETLIYPVFVKPAHLGSSVGISKVSVQGELPEALAHACNLDTKVLIEQAMHGKEIE) participates in ATP binding. Mg(2+) contacts are provided by Asp303, Glu317, and Asn319.

It belongs to the D-alanine--D-alanine ligase family. Mg(2+) is required as a cofactor. The cofactor is Mn(2+).

The protein resides in the cytoplasm. The enzyme catalyses 2 D-alanine + ATP = D-alanyl-D-alanine + ADP + phosphate + H(+). It functions in the pathway cell wall biogenesis; peptidoglycan biosynthesis. In terms of biological role, cell wall formation. The polypeptide is D-alanine--D-alanine ligase (Chlorobium phaeovibrioides (strain DSM 265 / 1930) (Prosthecochloris vibrioformis (strain DSM 265))).